Reading from the N-terminus, the 177-residue chain is Large ribosomal subunit protein uL6 (177 aa).

The protein belongs to the universal ribosomal protein uL6 family. In terms of assembly, part of the 50S ribosomal subunit.

This protein binds to the 23S rRNA, and is important in its secondary structure. It is located near the subunit interface in the base of the L7/L12 stalk, and near the tRNA binding site of the peptidyltransferase center. The sequence is that of Large ribosomal subunit protein uL6 from Aromatoleum aromaticum (strain DSM 19018 / LMG 30748 / EbN1) (Azoarcus sp. (strain EbN1)).